Here is a 242-residue protein sequence, read N- to C-terminus: 6-carboxyhexanoate--CoA ligase (242 aa).

This sequence belongs to the BioW family. As to quaternary structure, homodimer. It depends on Mg(2+) as a cofactor.

The enzyme catalyses heptanedioate + ATP + CoA = 6-carboxyhexanoyl-CoA + AMP + diphosphate. Its pathway is metabolic intermediate metabolism; pimeloyl-CoA biosynthesis; pimeloyl-CoA from pimelate: step 1/1. Catalyzes the transformation of pimelate into pimeloyl-CoA with concomitant hydrolysis of ATP to AMP. The chain is 6-carboxyhexanoate--CoA ligase from Veillonella parvula (strain ATCC 10790 / DSM 2008 / CCUG 5123 / JCM 12972 / NCTC 11810 / Te3) (Veillonella alcalescens).